The sequence spans 436 residues: Trigger factor (436 aa).

A PPIase FKBP-type domain is found at 163–248 (GDRVTIDFEG…VKKIEAAHLP (86 aa)).

The protein belongs to the FKBP-type PPIase family. Tig subfamily.

It localises to the cytoplasm. It catalyses the reaction [protein]-peptidylproline (omega=180) = [protein]-peptidylproline (omega=0). Involved in protein export. Acts as a chaperone by maintaining the newly synthesized protein in an open conformation. Functions as a peptidyl-prolyl cis-trans isomerase. This is Trigger factor from Polaromonas naphthalenivorans (strain CJ2).